A 166-amino-acid chain; its full sequence is Thiol peroxidase (166 aa).

The Thioredoxin domain occupies 18–166 (LKVGDKAPDV…NYEALLKVLK (149 aa)). Residue C60 is the Cysteine sulfenic acid (-SOH) intermediate of the active site. C60 and C94 are joined by a disulfide.

The protein belongs to the peroxiredoxin family. Tpx subfamily. As to quaternary structure, homodimer.

The enzyme catalyses a hydroperoxide + [thioredoxin]-dithiol = an alcohol + [thioredoxin]-disulfide + H2O. Its function is as follows. Thiol-specific peroxidase that catalyzes the reduction of hydrogen peroxide and organic hydroperoxides to water and alcohols, respectively. Plays a role in cell protection against oxidative stress by detoxifying peroxides. In Helicobacter pylori (strain J99 / ATCC 700824) (Campylobacter pylori J99), this protein is Thiol peroxidase.